The sequence spans 218 residues: Large ribosomal subunit protein uL2c (218 aa).

Residues 165–192 form a disordered region; that stretch reads GVVKNPVDHPHGGGEGRSPIGRSHPVTP.

It belongs to the universal ribosomal protein uL2 family. In terms of assembly, part of the 50S ribosomal subunit.

The protein resides in the plastid. It localises to the chloroplast. The protein is Large ribosomal subunit protein uL2c (rpl2) of Bigelowiella natans (Pedinomonas minutissima).